The sequence spans 241 residues: Uridylate kinase (241 aa).

An ATP-binding site is contributed by 12-15 (KISG). The involved in allosteric activation by GTP stretch occupies residues 20–25 (GEKGTG). UMP is bound at residue Gly-54. Residues Gly-55 and Arg-59 each coordinate ATP. Residues Asp-74 and 135 to 142 (TGNPYFST) each bind UMP. ATP contacts are provided by Asn-163, Tyr-169, and Asp-172.

Belongs to the UMP kinase family. In terms of assembly, homohexamer.

It localises to the cytoplasm. The catalysed reaction is UMP + ATP = UDP + ADP. The protein operates within pyrimidine metabolism; CTP biosynthesis via de novo pathway; UDP from UMP (UMPK route): step 1/1. Allosterically activated by GTP. Inhibited by UTP. In terms of biological role, catalyzes the reversible phosphorylation of UMP to UDP. This Lactobacillus delbrueckii subsp. bulgaricus (strain ATCC 11842 / DSM 20081 / BCRC 10696 / JCM 1002 / NBRC 13953 / NCIMB 11778 / NCTC 12712 / WDCM 00102 / Lb 14) protein is Uridylate kinase.